A 147-amino-acid polypeptide reads, in one-letter code: Basic phospholipase A2 beta-bungarotoxin A1 chain (147 aa).

The signal sequence occupies residues 1–19 (MNPAHLLVLSAVCVSLLGA). Positions 20–27 (ANIPPHPL) are excised as a propeptide. 6 disulfides stabilise this stretch: cysteine 54–cysteine 146, cysteine 56–cysteine 72, cysteine 71–cysteine 127, cysteine 78–cysteine 120, cysteine 88–cysteine 113, and cysteine 106–cysteine 118. 3 residues coordinate Ca(2+): tyrosine 55, glycine 57, and glycine 59. Residue histidine 75 is part of the active site. Aspartate 76 is a binding site for Ca(2+). The active site involves aspartate 121.

It belongs to the phospholipase A2 family. Group I subfamily. D49 sub-subfamily. As to quaternary structure, heterodimer; disulfide-linked. The A chains have phospholipase A2 activity and the B chains show homology with the basic protease inhibitors. The A1 chain is found in beta-1 and beta-2 bungarotoxins. Requires Ca(2+) as cofactor. In terms of tissue distribution, expressed by the venom gland.

It localises to the secreted. The catalysed reaction is a 1,2-diacyl-sn-glycero-3-phosphocholine + H2O = a 1-acyl-sn-glycero-3-phosphocholine + a fatty acid + H(+). In terms of biological role, snake venom phospholipase A2 (PLA2) that inhibits neuromuscular transmission by blocking acetylcholine release from the nerve termini. PLA2 catalyzes the calcium-dependent hydrolysis of the 2-acyl groups in 3-sn-phosphoglycerides. This chain is Basic phospholipase A2 beta-bungarotoxin A1 chain, found in Bungarus multicinctus (Many-banded krait).